We begin with the raw amino-acid sequence, 200 residues long: NADH-quinone oxidoreductase subunit C (200 aa).

It belongs to the complex I 30 kDa subunit family. NDH-1 is composed of 14 different subunits. Subunits NuoB, C, D, E, F, and G constitute the peripheral sector of the complex.

The protein localises to the cell inner membrane. It catalyses the reaction a quinone + NADH + 5 H(+)(in) = a quinol + NAD(+) + 4 H(+)(out). NDH-1 shuttles electrons from NADH, via FMN and iron-sulfur (Fe-S) centers, to quinones in the respiratory chain. The immediate electron acceptor for the enzyme in this species is believed to be ubiquinone. Couples the redox reaction to proton translocation (for every two electrons transferred, four hydrogen ions are translocated across the cytoplasmic membrane), and thus conserves the redox energy in a proton gradient. This is NADH-quinone oxidoreductase subunit C from Burkholderia ambifaria (strain ATCC BAA-244 / DSM 16087 / CCUG 44356 / LMG 19182 / AMMD) (Burkholderia cepacia (strain AMMD)).